The sequence spans 65 residues: Large ribosomal subunit protein bL33 (65 aa).

The segment at 20–40 is disordered; it reads VPPSEKRSPGVSRYTTEKNRR.

The protein belongs to the bacterial ribosomal protein bL33 family.

The chain is Large ribosomal subunit protein bL33 from Prochlorococcus marinus (strain MIT 9211).